The chain runs to 481 residues: ATP synthase subunit beta (481 aa).

G160–T167 lines the ATP pocket.

It belongs to the ATPase alpha/beta chains family. F-type ATPases have 2 components, CF(1) - the catalytic core - and CF(0) - the membrane proton channel. CF(1) has five subunits: alpha(3), beta(3), gamma(1), delta(1), epsilon(1). CF(0) has three main subunits: a(1), b(2) and c(9-12). The alpha and beta chains form an alternating ring which encloses part of the gamma chain. CF(1) is attached to CF(0) by a central stalk formed by the gamma and epsilon chains, while a peripheral stalk is formed by the delta and b chains.

It is found in the cell inner membrane. The catalysed reaction is ATP + H2O + 4 H(+)(in) = ADP + phosphate + 5 H(+)(out). Produces ATP from ADP in the presence of a proton gradient across the membrane. The catalytic sites are hosted primarily by the beta subunits. This is ATP synthase subunit beta from Anaeromyxobacter sp. (strain Fw109-5).